Reading from the N-terminus, the 292-residue chain is Ribosomal RNA small subunit methyltransferase A (292 aa).

Asn-28, Leu-30, Gly-55, Glu-76, Asp-101, and Asn-126 together coordinate S-adenosyl-L-methionine.

Belongs to the class I-like SAM-binding methyltransferase superfamily. rRNA adenine N(6)-methyltransferase family. RsmA subfamily.

It is found in the cytoplasm. It carries out the reaction adenosine(1518)/adenosine(1519) in 16S rRNA + 4 S-adenosyl-L-methionine = N(6)-dimethyladenosine(1518)/N(6)-dimethyladenosine(1519) in 16S rRNA + 4 S-adenosyl-L-homocysteine + 4 H(+). Its function is as follows. Specifically dimethylates two adjacent adenosines (A1518 and A1519) in the loop of a conserved hairpin near the 3'-end of 16S rRNA in the 30S particle. May play a critical role in biogenesis of 30S subunits. The sequence is that of Ribosomal RNA small subunit methyltransferase A from Bacillus anthracis.